The primary structure comprises 377 residues: 5-hydroxytryptamine receptor 1D (377 aa).

N-linked (GlcNAc...) asparagine glycans are attached at residues asparagine 5, asparagine 17, and asparagine 21. 3 consecutive transmembrane segments (helical) span residues 39–64 (ISLA…TTIL), 76–97 (LIGS…ISIA), and 110–134 (LCDI…VIAL). Cysteine 111 and cysteine 188 are oxidised to a cystine. The serotonin site is built by aspartate 118 and cysteine 122. The short motif at 135–137 (DRY) is the DRY motif; important for ligand-induced conformation changes element. 4 consecutive transmembrane segments (helical) span residues 155–176 (AAAM…PLFW), 195–218 (ISYT…VLYG), 301–326 (KTLG…VLPI), and 336–359 (GLFD…YTVF). Serine 321 provides a ligand contact to serotonin. The NPxxY motif; important for ligand-induced conformation changes and signaling motif lies at 352 to 356 (NPIIY).

This sequence belongs to the G-protein coupled receptor 1 family. In terms of assembly, homodimer. Heterodimer with HTR1B.

The protein resides in the cell membrane. G-protein coupled receptor for 5-hydroxytryptamine (serotonin). Also functions as a receptor for ergot alkaloid derivatives, various anxiolytic and antidepressant drugs and other psychoactive substances. Ligand binding causes a conformation change that triggers signaling via guanine nucleotide-binding proteins (G proteins) and modulates the activity of downstream effectors, such as adenylate cyclase. HTR1D is coupled to G(i)/G(o) G alpha proteins and mediates inhibitory neurotransmission by inhibiting adenylate cyclase activity. Regulates the release of 5-hydroxytryptamine in the brain, and thereby affects neural activity. May also play a role in regulating the release of other neurotransmitters. May play a role in vasoconstriction. This Oryctolagus cuniculus (Rabbit) protein is 5-hydroxytryptamine receptor 1D (HTR1D).